The chain runs to 245 residues: MRWSRGRGGGLLTWLKRLIVRSVLVVIGAWLAGILLFSFLPVPFSAVMVDRQVSAWLKGEFAYVAHSDWVAMDDIAPAMALAVMAAEDQKFPQHWGFDVDAIGQALKHNERNTQRVRGASTLSQQMVKNLFLWDGRSWVRKGLEAGITTGVELVWTKRRIITVYLNIAEFGPGVFGVEAAARRYFNKSASKLTASESALLAAVLPNPIRFRANAPSGYVIQRQQWILRQMRQMGGDAFLRDNNLN.

Residues 24 to 44 form a helical membrane-spanning segment; sequence LVVIGAWLAGILLFSFLPVPF.

This sequence belongs to the glycosyltransferase 51 family.

Its subcellular location is the cell inner membrane. The catalysed reaction is [GlcNAc-(1-&gt;4)-Mur2Ac(oyl-L-Ala-gamma-D-Glu-L-Lys-D-Ala-D-Ala)](n)-di-trans,octa-cis-undecaprenyl diphosphate + beta-D-GlcNAc-(1-&gt;4)-Mur2Ac(oyl-L-Ala-gamma-D-Glu-L-Lys-D-Ala-D-Ala)-di-trans,octa-cis-undecaprenyl diphosphate = [GlcNAc-(1-&gt;4)-Mur2Ac(oyl-L-Ala-gamma-D-Glu-L-Lys-D-Ala-D-Ala)](n+1)-di-trans,octa-cis-undecaprenyl diphosphate + di-trans,octa-cis-undecaprenyl diphosphate + H(+). It functions in the pathway cell wall biogenesis; peptidoglycan biosynthesis. Peptidoglycan polymerase that catalyzes glycan chain elongation from lipid-linked precursors. This chain is Biosynthetic peptidoglycan transglycosylase, found in Pectobacterium atrosepticum (strain SCRI 1043 / ATCC BAA-672) (Erwinia carotovora subsp. atroseptica).